The following is a 332-amino-acid chain: UDP-3-O-acylglucosamine N-acyltransferase (332 aa).

The active-site Proton acceptor is the His231.

This sequence belongs to the transferase hexapeptide repeat family. LpxD subfamily. As to quaternary structure, homotrimer.

The enzyme catalyses a UDP-3-O-[(3R)-3-hydroxyacyl]-alpha-D-glucosamine + a (3R)-hydroxyacyl-[ACP] = a UDP-2-N,3-O-bis[(3R)-3-hydroxyacyl]-alpha-D-glucosamine + holo-[ACP] + H(+). It functions in the pathway bacterial outer membrane biogenesis; LPS lipid A biosynthesis. Catalyzes the N-acylation of UDP-3-O-acylglucosamine using 3-hydroxyacyl-ACP as the acyl donor. Is involved in the biosynthesis of lipid A, a phosphorylated glycolipid that anchors the lipopolysaccharide to the outer membrane of the cell. This is UDP-3-O-acylglucosamine N-acyltransferase from Ruthia magnifica subsp. Calyptogena magnifica.